Reading from the N-terminus, the 100-residue chain is Small ribosomal subunit protein uS14c (100 aa).

It belongs to the universal ribosomal protein uS14 family. As to quaternary structure, part of the 30S ribosomal subunit.

It localises to the plastid. Its subcellular location is the chloroplast. Its function is as follows. Binds 16S rRNA, required for the assembly of 30S particles. The sequence is that of Small ribosomal subunit protein uS14c from Chlorella vulgaris (Green alga).